The following is a 272-amino-acid chain: Phosphate import ATP-binding protein PstB (272 aa).

Positions 26 to 267 (LDIKNLDLYY…PSEKQTEDYI (242 aa)) constitute an ABC transporter domain. 58 to 65 (GPSGCGKS) is an ATP binding site.

Belongs to the ABC transporter superfamily. Phosphate importer (TC 3.A.1.7) family. As to quaternary structure, the complex is composed of two ATP-binding proteins (PstB), two transmembrane proteins (PstC and PstA) and a solute-binding protein (PstS).

It localises to the cell inner membrane. The catalysed reaction is phosphate(out) + ATP + H2O = ADP + 2 phosphate(in) + H(+). Its function is as follows. Part of the ABC transporter complex PstSACB involved in phosphate import. Responsible for energy coupling to the transport system. The sequence is that of Phosphate import ATP-binding protein PstB from Idiomarina loihiensis (strain ATCC BAA-735 / DSM 15497 / L2-TR).